Consider the following 448-residue polypeptide: Chromosomal replication initiator protein DnaA 1 (448 aa).

The tract at residues Met-1 to Pro-76 is domain I, interacts with DnaA modulators. Residues Pro-76–Val-111 form a domain II region. Residues Lys-112–Cys-328 form a domain III, AAA+ region region. ATP contacts are provided by Gly-156, Gly-158, Lys-159, and Thr-160. Residues Arg-329 to Ser-448 are domain IV, binds dsDNA.

It belongs to the DnaA family. Oligomerizes as a right-handed, spiral filament on DNA at oriC.

Its subcellular location is the cytoplasm. Its function is as follows. Plays an essential role in the initiation and regulation of chromosomal replication. ATP-DnaA binds to the origin of replication (oriC) to initiate formation of the DNA replication initiation complex once per cell cycle. Binds the DnaA box (a 9 base pair repeat at the origin) and separates the double-stranded (ds)DNA. Forms a right-handed helical filament on oriC DNA; dsDNA binds to the exterior of the filament while single-stranded (ss)DNA is stabiized in the filament's interior. The ATP-DnaA-oriC complex binds and stabilizes one strand of the AT-rich DNA unwinding element (DUE), permitting loading of DNA polymerase. After initiation quickly degrades to an ADP-DnaA complex that is not apt for DNA replication. Binds acidic phospholipids. In Protochlamydia amoebophila (strain UWE25), this protein is Chromosomal replication initiator protein DnaA 1.